Reading from the N-terminus, the 514-residue chain is 2,3-bisphosphoglycerate-independent phosphoglycerate mutase (514 aa).

The Mn(2+) site is built by D14 and S64. The Phosphoserine intermediate role is filled by S64. Residues H125, 155–156 (RD), R187, R193, 263–266 (RADR), and K336 contribute to the substrate site. 5 residues coordinate Mn(2+): D403, H407, D444, H445, and H463.

Belongs to the BPG-independent phosphoglycerate mutase family. In terms of assembly, monomer. The cofactor is Mn(2+).

The enzyme catalyses (2R)-2-phosphoglycerate = (2R)-3-phosphoglycerate. Its pathway is carbohydrate degradation; glycolysis; pyruvate from D-glyceraldehyde 3-phosphate: step 3/5. Functionally, catalyzes the interconversion of 2-phosphoglycerate and 3-phosphoglycerate. The polypeptide is 2,3-bisphosphoglycerate-independent phosphoglycerate mutase (Shewanella oneidensis (strain ATCC 700550 / JCM 31522 / CIP 106686 / LMG 19005 / NCIMB 14063 / MR-1)).